Consider the following 45-residue polypeptide: uncharacterized protein (45 aa).

This is an uncharacterized protein from Acidianus two-tailed virus (ATV).